We begin with the raw amino-acid sequence, 174 residues long: WAP four-disulfide core domain protein 2 (174 aa).

A signal peptide spans 1–25; it reads MPACRLCLLAAGLLLGLLLFTPISA. Positions 29–74 constitute a WAP 1 domain; it reads DAEKPGECPQLEPITDCVLECTLDKDCADNRKCCQAGCSSVCSKPN. 4 disulfide bridges follow: Cys36-Cys62, Cys45-Cys66, Cys49-Cys61, and Cys55-Cys70. The disordered stretch occupies residues 68–117; the sequence is SVCSKPNGPSEGELSGTDTKLSETGTTTQSAGLDHTTKPPGGQVSTKPPA. The segment covering 83 to 98 has biased composition (polar residues); the sequence is GTDTKLSETGTTTQSA. The WAP 2 domain maps to 125–173; sequence VREKQGTCPSVDIPKLGLCEDQCQVDSQCSGNMKCCRNGCGKMACTTPK. Intrachain disulfides connect Cys132-Cys160, Cys143-Cys164, Cys147-Cys159, and Cys153-Cys169.

In terms of assembly, homotrimer; disulfide-linked.

The protein resides in the secreted. Functionally, broad range protease inhibitor. This is WAP four-disulfide core domain protein 2 (Wfdc2) from Mus musculus (Mouse).